Here is a 131-residue protein sequence, read N- to C-terminus: Small ribosomal subunit protein bS6 (131 aa).

The interval 96-131 (VTAPSPMMKEEKSKSLLAKDEAAAPAPAPATEQATA) is disordered. Residues 103-117 (MKEEKSKSLLAKDEA) show a composition bias toward basic and acidic residues. Over residues 118-131 (AAPAPAPATEQATA) the composition is skewed to low complexity.

This sequence belongs to the bacterial ribosomal protein bS6 family.

Binds together with bS18 to 16S ribosomal RNA. This chain is Small ribosomal subunit protein bS6, found in Methylobacillus flagellatus (strain ATCC 51484 / DSM 6875 / VKM B-1610 / KT).